The chain runs to 382 residues: Mannitol-1-phosphate 5-dehydrogenase (382 aa).

3–14 is an NAD(+) binding site; sequence ALHFGAGNIGRG. Lys-269 carries the N6-acetyllysine modification.

This sequence belongs to the mannitol dehydrogenase family.

The catalysed reaction is D-mannitol 1-phosphate + NAD(+) = beta-D-fructose 6-phosphate + NADH + H(+). In Escherichia coli O45:K1 (strain S88 / ExPEC), this protein is Mannitol-1-phosphate 5-dehydrogenase.